Reading from the N-terminus, the 857-residue chain is Leucine--tRNA ligase (857 aa).

A 'HIGH' region motif is present at residues Pro42 to His52. Positions Lys616–Ser620 match the 'KMSKS' region motif. Lys619 lines the ATP pocket.

This sequence belongs to the class-I aminoacyl-tRNA synthetase family.

The protein localises to the cytoplasm. The catalysed reaction is tRNA(Leu) + L-leucine + ATP = L-leucyl-tRNA(Leu) + AMP + diphosphate. This is Leucine--tRNA ligase from Parasynechococcus marenigrum (strain WH8102).